A 605-amino-acid chain; its full sequence is Protein Spindly (605 aa).

Position 1 is an N-acetylmethionine (methionine 1). A coiled-coil region spans residues 3–442 (TDIVINLRCK…ELKLKYEPEE (440 aa)). Phosphoserine is present on residues serine 513, serine 515, and serine 555. The segment at 545-581 (LSERSGNTLNSPRLAAESKLQTEVKEGKETASKLEKE) is disordered. Over residues 564-581 (LQTEVKEGKETASKLEKE) the composition is skewed to basic and acidic residues.

This sequence belongs to the Spindly family. As to quaternary structure, interacts with KNTC1 and ZW10. These interactions appear weak and may be transient or indirect. Interacts with dynein intermediate chain and dynactin (DCTN1). Interacts with the catalytically active form of USP45. Post-translationally, monoubiquitinated with'Lys-48' linkage. Deubiquitinated by USP45.

The protein resides in the cytoplasm. The protein localises to the cytoskeleton. It localises to the microtubule organizing center. It is found in the centrosome. Its subcellular location is the chromosome. The protein resides in the centromere. The protein localises to the kinetochore. It localises to the nucleus. It is found in the spindle pole. In terms of biological role, required for the localization of dynein and dynactin to the mitotic kintochore. Dynein is believed to control the initial lateral interaction between the kinetochore and spindle microtubules and to facilitate the subsequent formation of end-on kinetochore-microtubule attachments mediated by the NDC80 complex. Also required for correct spindle orientation. Does not appear to be required for the removal of spindle assembly checkpoint (SAC) proteins from the kinetochore upon bipolar spindle attachment. Acts as an adapter protein linking the dynein motor complex to various cargos and converts dynein from a non-processive to a highly processive motor in the presence of dynactin. Facilitates the interaction between dynein and dynactin and activates dynein processivity (the ability to move along a microtubule for a long distance without falling off the track). Plays a role in cell migration. This chain is Protein Spindly, found in Macaca fascicularis (Crab-eating macaque).